The sequence spans 114 residues: Large ribosomal subunit protein uL22 (114 aa).

It belongs to the universal ribosomal protein uL22 family. In terms of assembly, part of the 50S ribosomal subunit.

Its function is as follows. This protein binds specifically to 23S rRNA; its binding is stimulated by other ribosomal proteins, e.g. L4, L17, and L20. It is important during the early stages of 50S assembly. It makes multiple contacts with different domains of the 23S rRNA in the assembled 50S subunit and ribosome. In terms of biological role, the globular domain of the protein is located near the polypeptide exit tunnel on the outside of the subunit, while an extended beta-hairpin is found that lines the wall of the exit tunnel in the center of the 70S ribosome. The sequence is that of Large ribosomal subunit protein uL22 from Methylacidiphilum infernorum (isolate V4) (Methylokorus infernorum (strain V4)).